Reading from the N-terminus, the 150-residue chain is Ribosome-binding factor A (150 aa).

The interval 126–150 is disordered; it reads EVARDLSHDDDEDGGADEAPRNGDE.

The protein belongs to the RbfA family. As to quaternary structure, monomer. Binds 30S ribosomal subunits, but not 50S ribosomal subunits or 70S ribosomes.

It localises to the cytoplasm. In terms of biological role, one of several proteins that assist in the late maturation steps of the functional core of the 30S ribosomal subunit. Associates with free 30S ribosomal subunits (but not with 30S subunits that are part of 70S ribosomes or polysomes). Required for efficient processing of 16S rRNA. May interact with the 5'-terminal helix region of 16S rRNA. The polypeptide is Ribosome-binding factor A (Brucella abortus (strain S19)).